A 303-amino-acid polypeptide reads, in one-letter code: Mycothiol acetyltransferase (303 aa).

N-acetyltransferase domains are found at residues 1-150 (MALL…RPLD) and 162-303 (VTIR…QFGR). A 1D-myo-inositol 2-(L-cysteinylamino)-2-deoxy-alpha-D-glucopyranoside-binding site is contributed by E18. 77 to 79 (LAV) serves as a coordination point for acetyl-CoA. 3 residues coordinate 1D-myo-inositol 2-(L-cysteinylamino)-2-deoxy-alpha-D-glucopyranoside: E189, K229, and E237. Acetyl-CoA-binding positions include 241–243 (VGV) and 248–254 (QGNGLGR). Y275 contributes to the 1D-myo-inositol 2-(L-cysteinylamino)-2-deoxy-alpha-D-glucopyranoside binding site. 280–285 (NTAAIK) provides a ligand contact to acetyl-CoA.

It belongs to the acetyltransferase family. MshD subfamily. In terms of assembly, monomer.

The catalysed reaction is 1D-myo-inositol 2-(L-cysteinylamino)-2-deoxy-alpha-D-glucopyranoside + acetyl-CoA = mycothiol + CoA + H(+). In terms of biological role, catalyzes the transfer of acetyl from acetyl-CoA to desacetylmycothiol (Cys-GlcN-Ins) to form mycothiol. The protein is Mycothiol acetyltransferase of Saccharopolyspora erythraea (strain ATCC 11635 / DSM 40517 / JCM 4748 / NBRC 13426 / NCIMB 8594 / NRRL 2338).